A 718-amino-acid chain; its full sequence is MRSLSGKMHEVIICEKPKSSEKIAGALFPDAMKKKHGKVSYWEHVEGDKRVTIVSAVGHLYSLRPRQSNEEHFFDLEWAPIHEIDKKKGYVKDYLNVIRKFAAGADRYIHACDYDIEGTLIGFNALKYGCGEEALRKTSRMKFSTLTREEIQRAYKNPIEVDYGQVDSGAARHILDFIFGVNISRSLMKSVKAATNRFIKLSAGRVQTPTLAILVEREKEIRDFKPVPYWIIRAELGEGIIAESKRGKIFKRELVDSILEKCQGSDAEVKDVRVRDTIRKPPVPFDLGTLQSEAYRVFGFSPKKTQTIAQNLYTEGYTSYPRTSSQKLPESIGYEKILKNLAKNPRFGVHIERLRGPLKPHEGKKEDDAHPAIHPTGLLPSELSKDEKKVYDLIVHRFISVFGEDAILQTMKVELEIGEEEFSFSRKRVSKAGWMESYPYTKMEDEEFPEISGGDSLAVRSVSADERETKPPARYNEASLIRELERRGLGTKSTRADIIAKLYDRKYIEGKKIRVSPLGENIIDTLTRYCEKIISEELTRQFERELEDIMRGKISKDRVIDEAITEVRSILSDIEENLRDIGKELYRAYQDSRVVGECPACGGKLVIKYSPRNRSTFVGCSSYPDCRTVYSLPRGASVLKSLCEKCGLPMISYGRPRQRACLDPKCGKKKSEVEEVVGKCPECGSDLIKRSGRYGEFVGCKGFPKCRFTCSVDEVPEG.

The 143-residue stretch at 9–151 (HEVIICEKPK…KFSTLTREEI (143 aa)) folds into the Toprim domain. The Mg(2+) site is built by E15 and D113. The Topo IA-type catalytic domain maps to 162–571 (DYGQVDSGAA…EAITEVRSIL (410 aa)). The interval 202 to 207 (SAGRVQ) is interaction with DNA. The active-site O-(5'-phospho-DNA)-tyrosine intermediate is the Y320. A compositionally biased stretch (basic and acidic residues) spans 361-371 (HEGKKEDDAHP). The tract at residues 361-380 (HEGKKEDDAHPAIHPTGLLP) is disordered. C4-type zinc fingers lie at residues 598 to 626 (CPACGGKLVIKYSPRNRSTFVGCSSYPDC) and 680 to 706 (CPECGSDLIKRSGRYGEFVGCKGFPKC).

The protein belongs to the type IA topoisomerase family. As to quaternary structure, monomer. It depends on Mg(2+) as a cofactor.

The catalysed reaction is ATP-independent breakage of single-stranded DNA, followed by passage and rejoining.. Its function is as follows. Releases the supercoiling and torsional tension of DNA, which is introduced during the DNA replication and transcription, by transiently cleaving and rejoining one strand of the DNA duplex. Introduces a single-strand break via transesterification at a target site in duplex DNA. The scissile phosphodiester is attacked by the catalytic tyrosine of the enzyme, resulting in the formation of a DNA-(5'-phosphotyrosyl)-enzyme intermediate and the expulsion of a 3'-OH DNA strand. The free DNA strand then undergoes passage around the unbroken strand, thus removing DNA supercoils. Finally, in the religation step, the DNA 3'-OH attacks the covalent intermediate to expel the active-site tyrosine and restore the DNA phosphodiester backbone. In Methanothermobacter thermautotrophicus (strain ATCC 29096 / DSM 1053 / JCM 10044 / NBRC 100330 / Delta H) (Methanobacterium thermoautotrophicum), this protein is DNA topoisomerase 1.